The primary structure comprises 200 residues: dTTP/UTP pyrophosphatase (200 aa).

Aspartate 81 acts as the Proton acceptor in catalysis.

The protein belongs to the Maf family. YhdE subfamily. The cofactor is a divalent metal cation.

Its subcellular location is the cytoplasm. It catalyses the reaction dTTP + H2O = dTMP + diphosphate + H(+). It carries out the reaction UTP + H2O = UMP + diphosphate + H(+). Functionally, nucleoside triphosphate pyrophosphatase that hydrolyzes dTTP and UTP. May have a dual role in cell division arrest and in preventing the incorporation of modified nucleotides into cellular nucleic acids. The chain is dTTP/UTP pyrophosphatase from Cupriavidus pinatubonensis (strain JMP 134 / LMG 1197) (Cupriavidus necator (strain JMP 134)).